A 391-amino-acid chain; its full sequence is Phosphoglycerate kinase (391 aa).

Substrate is bound by residues 21–23, Arg-36, 59–62, Arg-113, and Arg-146; these read DLN and HLGR. ATP is bound by residues Lys-197, Glu-319, and 345–348; that span reads GGDT.

This sequence belongs to the phosphoglycerate kinase family. As to quaternary structure, monomer.

The protein localises to the cytoplasm. It carries out the reaction (2R)-3-phosphoglycerate + ATP = (2R)-3-phospho-glyceroyl phosphate + ADP. It participates in carbohydrate degradation; glycolysis; pyruvate from D-glyceraldehyde 3-phosphate: step 2/5. This is Phosphoglycerate kinase from Xanthomonas campestris pv. campestris (strain 8004).